The primary structure comprises 299 residues: MLSTRLALRSNIPMADFTTWRVGGPAQWLLEPASVDETLEALQWAQQEHLPCRVIGAGSNLLIHDDGLPGLTLSLRKLQGASLNAENGVVEALAGEPIPTLARRAARAGLNGLAWSVGIPGTVGGAAVMNAGAQGGCTADWLESVRVAPLVGGVSFELSRDELDFDYRHSRLQDEELVVLSARFRLEPGHDPEEITRITSGNLSHRTSTQPYTQPSCGSVFRNPEPLKAGRLIEGLGLKGNRVGGAEVSTLHANFIVNTGAATAADIDSLIQRVQQQVEAAHSLHLHPEVKRLGFTEAA.

Residues 21-189 (RVGGPAQWLL…LSARFRLEPG (169 aa)) enclose the FAD-binding PCMH-type domain. Residue arginine 168 is part of the active site. Residue serine 219 is the Proton donor of the active site. The active site involves glutamate 289.

The protein belongs to the MurB family. Requires FAD as cofactor.

It is found in the cytoplasm. The catalysed reaction is UDP-N-acetyl-alpha-D-muramate + NADP(+) = UDP-N-acetyl-3-O-(1-carboxyvinyl)-alpha-D-glucosamine + NADPH + H(+). The protein operates within cell wall biogenesis; peptidoglycan biosynthesis. Cell wall formation. This is UDP-N-acetylenolpyruvoylglucosamine reductase from Parasynechococcus marenigrum (strain WH8102).